The following is a 147-amino-acid chain: S-protein homolog 10 (147 aa).

A signal peptide spans 1 to 20 (MNCFSYFFLVIILCAGLNNA).

The protein belongs to the plant self-incompatibility (S1) protein family.

The protein resides in the secreted. This Arabidopsis thaliana (Mouse-ear cress) protein is S-protein homolog 10.